We begin with the raw amino-acid sequence, 206 residues long: 2-phospho-L-lactate guanylyltransferase (206 aa).

It belongs to the CofC family. In terms of assembly, homodimer.

It carries out the reaction (2S)-2-phospholactate + GTP + H(+) = (2S)-lactyl-2-diphospho-5'-guanosine + diphosphate. It functions in the pathway cofactor biosynthesis; coenzyme F420 biosynthesis. Guanylyltransferase that catalyzes the activation of (2S)-2-phospholactate (2-PL) as (2S)-lactyl-2-diphospho-5'-guanosine, via the condensation of 2-PL with GTP. It is involved in the biosynthesis of coenzyme F420, a hydride carrier cofactor. The polypeptide is 2-phospho-L-lactate guanylyltransferase (Archaeoglobus fulgidus (strain ATCC 49558 / DSM 4304 / JCM 9628 / NBRC 100126 / VC-16)).